The primary structure comprises 352 residues: Holliday junction branch migration complex subunit RuvB (352 aa).

The tract at residues 4-185 is large ATPase domain (RuvB-L); it reads ADRLIAATGP…FGIVQRLEFY (182 aa). Residues isoleucine 24, arginine 25, glycine 66, lysine 69, threonine 70, threonine 71, 132-134, arginine 175, tyrosine 185, and arginine 222 each bind ATP; that span reads EDF. Threonine 70 contributes to the Mg(2+) binding site. Residues 186 to 256 form a small ATPAse domain (RuvB-S) region; the sequence is STADLATIVS…IADLALNLLD (71 aa). Residues 259–352 are head domain (RuvB-H); it reads ERGFDHQDRR…VDEFLDAVDD (94 aa). Residues arginine 295, arginine 314, and arginine 319 each coordinate DNA.

The protein belongs to the RuvB family. As to quaternary structure, homohexamer. Forms an RuvA(8)-RuvB(12)-Holliday junction (HJ) complex. HJ DNA is sandwiched between 2 RuvA tetramers; dsDNA enters through RuvA and exits via RuvB. An RuvB hexamer assembles on each DNA strand where it exits the tetramer. Each RuvB hexamer is contacted by two RuvA subunits (via domain III) on 2 adjacent RuvB subunits; this complex drives branch migration. In the full resolvosome a probable DNA-RuvA(4)-RuvB(12)-RuvC(2) complex forms which resolves the HJ.

It localises to the cytoplasm. The enzyme catalyses ATP + H2O = ADP + phosphate + H(+). In terms of biological role, the RuvA-RuvB-RuvC complex processes Holliday junction (HJ) DNA during genetic recombination and DNA repair, while the RuvA-RuvB complex plays an important role in the rescue of blocked DNA replication forks via replication fork reversal (RFR). RuvA specifically binds to HJ cruciform DNA, conferring on it an open structure. The RuvB hexamer acts as an ATP-dependent pump, pulling dsDNA into and through the RuvAB complex. RuvB forms 2 homohexamers on either side of HJ DNA bound by 1 or 2 RuvA tetramers; 4 subunits per hexamer contact DNA at a time. Coordinated motions by a converter formed by DNA-disengaged RuvB subunits stimulates ATP hydrolysis and nucleotide exchange. Immobilization of the converter enables RuvB to convert the ATP-contained energy into a lever motion, pulling 2 nucleotides of DNA out of the RuvA tetramer per ATP hydrolyzed, thus driving DNA branch migration. The RuvB motors rotate together with the DNA substrate, which together with the progressing nucleotide cycle form the mechanistic basis for DNA recombination by continuous HJ branch migration. Branch migration allows RuvC to scan DNA until it finds its consensus sequence, where it cleaves and resolves cruciform DNA. This is Holliday junction branch migration complex subunit RuvB from Pseudomonas fluorescens (strain ATCC BAA-477 / NRRL B-23932 / Pf-5).